A 205-amino-acid polypeptide reads, in one-letter code: Peptidyl-tRNA hydrolase (205 aa).

Position 18 (Y18) interacts with tRNA. H23 (proton acceptor) is an active-site residue. TRNA contacts are provided by Y69, N71, and N117.

The protein belongs to the PTH family. In terms of assembly, monomer.

The protein localises to the cytoplasm. The enzyme catalyses an N-acyl-L-alpha-aminoacyl-tRNA + H2O = an N-acyl-L-amino acid + a tRNA + H(+). Its function is as follows. Hydrolyzes ribosome-free peptidyl-tRNAs (with 1 or more amino acids incorporated), which drop off the ribosome during protein synthesis, or as a result of ribosome stalling. Catalyzes the release of premature peptidyl moieties from peptidyl-tRNA molecules trapped in stalled 50S ribosomal subunits, and thus maintains levels of free tRNAs and 50S ribosomes. The protein is Peptidyl-tRNA hydrolase of Thermosynechococcus vestitus (strain NIES-2133 / IAM M-273 / BP-1).